Reading from the N-terminus, the 372-residue chain is UDP-N-acetylglucosamine 2-epimerase (372 aa).

Residues Arg10, Lys15, Asp95, Glu117, His212, Gln270, Phe275, Ser289–Gly291, Glu295, and Arg312 each bind substrate.

It belongs to the UDP-N-acetylglucosamine 2-epimerase family.

The enzyme catalyses UDP-N-acetyl-alpha-D-glucosamine = UDP-N-acetyl-alpha-D-mannosamine. The protein operates within capsule biogenesis; capsule polysaccharide biosynthesis. Its activity is regulated as follows. Activated by UDP-GlcNAc and inhibited by 2-acetamidoglucal and UDP. Activity is strongly decreased in the presence of Co(2+) and abolished in the presence of Mn(2+) or Zn(2+). Its function is as follows. Catalyzes the interconversion between UDP-N-acetylglucosamine (UDP-GlcNAc) and UDP-N-acetylmannosamine (UDP-ManNAc). Involved in the biosynthesis of the capsular polysaccharides. In vitro, can also use several chemoenzymatically synthesized UDP-ManNAc derivatives as substrates, with lower efficiency. This is UDP-N-acetylglucosamine 2-epimerase from Neisseria meningitidis serogroup A / serotype 4A (strain DSM 15465 / Z2491).